The chain runs to 310 residues: Putative carbonic anhydrase 5 (310 aa).

Residues 1-20 form the signal peptide; sequence MPSHLLVLSLLVALLVVVSC. The Alpha-carbonic anhydrase domain maps to 26 to 280; it reads HGWGYDENNG…LNGRRIQYRP (255 aa). Residues histidine 117, histidine 119, and histidine 142 each coordinate Zn(2+). Position 223-224 (223-224) interacts with substrate; that stretch reads TT.

It belongs to the alpha-carbonic anhydrase family.

It is found in the secreted. The catalysed reaction is hydrogencarbonate + H(+) = CO2 + H2O. Reversible hydration of carbon dioxide. This chain is Putative carbonic anhydrase 5 (cah-5), found in Caenorhabditis elegans.